Reading from the N-terminus, the 652-residue chain is Probable endo-1,3(4)-beta-glucanase AFUB_029980 (652 aa).

A signal peptide spans 1 to 21; it reads MAPSSLLLSVGSLITSSLVSA. The GH16 domain occupies 36–289; sequence ESWQGESFIN…WAGNVFAEST (254 aa). N-linked (GlcNAc...) asparagine glycosylation is present at N64. E145 (nucleophile) is an active-site residue. Residue E150 is the Proton donor of the active site. N-linked (GlcNAc...) asparagine glycans are attached at residues N200 and N208. Residues 379–423 are disordered; sequence NTVATSAADHATPSSAETTTVPAATGAPSVSATEGGDSELESTST. Positions 390-410 are enriched in polar residues; the sequence is TPSSAETTTVPAATGAPSVSA. A glycan (N-linked (GlcNAc...) asparagine) is linked at N453. A disordered region spans residues 509-551; that stretch reads SEIPTAPPEPVSQAVSTGSFDDSDTAQGDSEEQGSIASASVAP. The span at 529–540 shows a compositional bias: acidic residues; the sequence is DDSDTAQGDSEE. N630 carries the GPI-anchor amidated asparagine lipid modification. The propeptide at 631–652 is removed in mature form; the sequence is GANRMSVGLSGLIGVMFIAALA.

This sequence belongs to the glycosyl hydrolase 16 family.

The protein localises to the cell membrane. The catalysed reaction is Endohydrolysis of (1-&gt;3)- or (1-&gt;4)-linkages in beta-D-glucans when the glucose residue whose reducing group is involved in the linkage to be hydrolyzed is itself substituted at C-3.. In terms of biological role, mixed-linked glucanase involved in the degradation of complex natural cellulosic substrates. This is Probable endo-1,3(4)-beta-glucanase AFUB_029980 from Aspergillus fumigatus (strain CBS 144.89 / FGSC A1163 / CEA10) (Neosartorya fumigata).